Reading from the N-terminus, the 288-residue chain is Probable endonuclease 4 (288 aa).

Zn(2+)-binding residues include histidine 75, histidine 115, glutamate 153, aspartate 187, histidine 190, histidine 224, aspartate 237, histidine 239, and glutamate 269.

This sequence belongs to the AP endonuclease 2 family. Zn(2+) serves as cofactor.

The catalysed reaction is Endonucleolytic cleavage to 5'-phosphooligonucleotide end-products.. Endonuclease IV plays a role in DNA repair. It cleaves phosphodiester bonds at apurinic or apyrimidinic (AP) sites, generating a 3'-hydroxyl group and a 5'-terminal sugar phosphate. This is Probable endonuclease 4 from Chlamydia trachomatis serovar L2 (strain ATCC VR-902B / DSM 19102 / 434/Bu).